We begin with the raw amino-acid sequence, 308 residues long: GTPase Era (308 aa).

Residues 14-181 enclose the Era-type G domain; that stretch reads RCGFVALIGA…RSTLAEMVPP (168 aa). The interval 22–29 is G1; sequence GAPNVGKS. 22–29 provides a ligand contact to GTP; sequence GAPNVGKS. Residues 48-52 are G2; sequence QTTRA. A G3 region spans residues 69 to 72; it reads DTPG. GTP contacts are provided by residues 69–73 and 131–134; these read DTPGI and NKVD. The G4 stretch occupies residues 131–134; sequence NKVD. Positions 160–162 are G5; sequence IAA. The region spanning 212–289 is the KH type-2 domain; the sequence is LHQELPYQST…HLFLFVKVRE (78 aa).

The protein belongs to the TRAFAC class TrmE-Era-EngA-EngB-Septin-like GTPase superfamily. Era GTPase family. In terms of assembly, monomer.

It is found in the cytoplasm. The protein resides in the cell inner membrane. Its function is as follows. An essential GTPase that binds both GDP and GTP, with rapid nucleotide exchange. Plays a role in 16S rRNA processing and 30S ribosomal subunit biogenesis and possibly also in cell cycle regulation and energy metabolism. This is GTPase Era from Bradyrhizobium diazoefficiens (strain JCM 10833 / BCRC 13528 / IAM 13628 / NBRC 14792 / USDA 110).